Consider the following 463-residue polypeptide: uncharacterized protein (463 aa).

Residues 13-81 (IPLYQQLYRY…PRSGWFADYH (69 aa)) form the HTH gntR-type domain. The segment at residues 41-60 (KRLLANQLSISQTTVERAYE) is a DNA-binding region (H-T-H motif). Lys308 carries the post-translational modification N6-(pyridoxal phosphate)lysine.

It in the C-terminal section; belongs to the class-I pyridoxal-phosphate-dependent aminotransferase family. Requires pyridoxal 5'-phosphate as cofactor.

This is an uncharacterized protein from Bacillus subtilis (strain 168).